Reading from the N-terminus, the 569-residue chain is Methionine--tRNA ligase (569 aa).

A 'HIGH' region motif is present at residues Pro-11–Asn-21. Residues Cys-143, Cys-146, Cys-156, and Cys-159 each coordinate Zn(2+). Positions Lys-342–Ser-346 match the 'KMSKS' region motif. Thr-345 is an ATP binding site.

The protein belongs to the class-I aminoacyl-tRNA synthetase family. MetG type 1 subfamily. In terms of assembly, monomer. Zn(2+) serves as cofactor.

The protein resides in the cytoplasm. It catalyses the reaction tRNA(Met) + L-methionine + ATP = L-methionyl-tRNA(Met) + AMP + diphosphate. In terms of biological role, is required not only for elongation of protein synthesis but also for the initiation of all mRNA translation through initiator tRNA(fMet) aminoacylation. In Caulobacter vibrioides (strain ATCC 19089 / CIP 103742 / CB 15) (Caulobacter crescentus), this protein is Methionine--tRNA ligase.